Consider the following 115-residue polypeptide: U3-lycotoxin-Ls1g (115 aa).

Residues 1–20 (MKFVLLFGVFLVTLFSYSSA) form the signal peptide. A propeptide spanning residues 21-44 (EMLDDFDQADEDELLSLIEKEEAR) is cleaved from the precursor. 4 disulfides stabilise this stretch: Cys-48–Cys-63, Cys-55–Cys-72, Cys-62–Cys-87, and Cys-74–Cys-85.

The protein belongs to the neurotoxin 19 (CSTX) family. 01 subfamily. As to expression, expressed by the venom gland.

The protein localises to the secreted. This is U3-lycotoxin-Ls1g from Lycosa singoriensis (Wolf spider).